We begin with the raw amino-acid sequence, 285 residues long: Acetylglutamate kinase (285 aa).

Residues 55 to 56, Arg-77, and Asn-171 contribute to the substrate site; that span reads GG.

Belongs to the acetylglutamate kinase family. ArgB subfamily.

Its subcellular location is the cytoplasm. It catalyses the reaction N-acetyl-L-glutamate + ATP = N-acetyl-L-glutamyl 5-phosphate + ADP. The protein operates within amino-acid biosynthesis; L-arginine biosynthesis; N(2)-acetyl-L-ornithine from L-glutamate: step 2/4. Its function is as follows. Catalyzes the ATP-dependent phosphorylation of N-acetyl-L-glutamate. This chain is Acetylglutamate kinase, found in Chlorobaculum tepidum (strain ATCC 49652 / DSM 12025 / NBRC 103806 / TLS) (Chlorobium tepidum).